The primary structure comprises 416 residues: Glutamyl-tRNA reductase (416 aa).

Substrate contacts are provided by residues 49 to 52 (TCNR), S105, 110 to 112 (EPQ), and Q116. C50 functions as the Nucleophile in the catalytic mechanism. 185–190 (GAGETI) serves as a coordination point for NADP(+).

This sequence belongs to the glutamyl-tRNA reductase family. As to quaternary structure, homodimer.

The enzyme catalyses (S)-4-amino-5-oxopentanoate + tRNA(Glu) + NADP(+) = L-glutamyl-tRNA(Glu) + NADPH + H(+). Its pathway is porphyrin-containing compound metabolism; protoporphyrin-IX biosynthesis; 5-aminolevulinate from L-glutamyl-tRNA(Glu): step 1/2. Functionally, catalyzes the NADPH-dependent reduction of glutamyl-tRNA(Glu) to glutamate 1-semialdehyde (GSA). The chain is Glutamyl-tRNA reductase from Shewanella sp. (strain MR-7).